Reading from the N-terminus, the 161-residue chain is uncharacterized protein (161 aa).

2 disordered regions span residues 47–83 (KPAK…NNIN) and 104–137 (RRLQ…SKNY). Residues 50–64 (KRNIHGHNNHTRSSN) are compositionally biased toward basic residues. Composition is skewed to low complexity over residues 73–83 (NINHNNNNNIN) and 115–130 (SSSS…TNDN).

This is an uncharacterized protein from Dictyostelium discoideum (Social amoeba).